The sequence spans 816 residues: Protein EFR3 homolog B (816 aa).

Over residues 206–219 (SGEGTESRSPSPLQ) the composition is skewed to polar residues. Residues 206–230 (SGEGTESRSPSPLQASEKEKESPAE) form a disordered region. Residues 221–230 (SEKEKESPAE) are compositionally biased toward basic and acidic residues.

Belongs to the EFR3 family. Component of a phosphatidylinositol 4-kinase (PI4K) complex. Post-translationally, palmitoylated at its N-terminus, anchoring the protein to the plasma membrane.

The protein resides in the cell membrane. Functionally, component of a complex required to localize phosphatidylinositol 4-kinase (PI4K) to the plasma membrane. The complex acts as a regulator of phosphatidylinositol 4-phosphate (PtdIns(4)P) synthesis. In the complex, efr3b probably acts as the membrane-anchoring component. In Danio rerio (Zebrafish), this protein is Protein EFR3 homolog B (efr3b).